A 612-amino-acid polypeptide reads, in one-letter code: Sulfite reductase [NADPH] hemoprotein beta-component (612 aa).

The segment at 1-26 (MDDHKPIETPDGPAVDTPGIGARRYE) is disordered. [4Fe-4S] cluster is bound by residues cysteine 469, cysteine 475, cysteine 514, and cysteine 518. Cysteine 518 is a siroheme binding site.

This sequence belongs to the nitrite and sulfite reductase 4Fe-4S domain family. As to quaternary structure, alpha(8)-beta(8). The alpha component is a flavoprotein, the beta component is a hemoprotein. It depends on siroheme as a cofactor. Requires [4Fe-4S] cluster as cofactor.

The enzyme catalyses hydrogen sulfide + 3 NADP(+) + 3 H2O = sulfite + 3 NADPH + 4 H(+). It functions in the pathway sulfur metabolism; hydrogen sulfide biosynthesis; hydrogen sulfide from sulfite (NADPH route): step 1/1. Its function is as follows. Component of the sulfite reductase complex that catalyzes the 6-electron reduction of sulfite to sulfide. This is one of several activities required for the biosynthesis of L-cysteine from sulfate. The protein is Sulfite reductase [NADPH] hemoprotein beta-component of Methylorubrum extorquens (strain CM4 / NCIMB 13688) (Methylobacterium extorquens).